A 211-amino-acid chain; its full sequence is Probable endopeptidase cgR_2070 (211 aa).

An N-terminal signal peptide occupies residues 1–35 (MGKHRRNNSNATRKAVAASAVALGATAAIASPAQA). Positions 97-211 (ASTGQAIVDA…YMPFHSAVRF (115 aa)) constitute a NlpC/P60 domain. Cys127 serves as the catalytic Nucleophile. His175 (proton acceptor) is an active-site residue. His187 is an active-site residue.

Belongs to the peptidase C40 family.

The protein localises to the secreted. The chain is Probable endopeptidase cgR_2070 from Corynebacterium glutamicum (strain R).